The chain runs to 142 residues: Small ribosomal subunit protein bS6 (142 aa).

The span at 110-133 (NKKPSHAKEKHEKTEHTHSHHTEE) shows a compositional bias: basic and acidic residues. The interval 110–142 (NKKPSHAKEKHEKTEHTHSHHTEEAESVGSHSE) is disordered.

It belongs to the bacterial ribosomal protein bS6 family.

Binds together with bS18 to 16S ribosomal RNA. The protein is Small ribosomal subunit protein bS6 (rpsF) of Helicobacter pylori (strain ATCC 700392 / 26695) (Campylobacter pylori).